The chain runs to 386 residues: O-methyltransferase aunE (386 aa).

Trp200 contributes to the S-adenosyl-L-methionine binding site. His299 (proton acceptor) is an active-site residue.

Belongs to the class I-like SAM-binding methyltransferase superfamily. Cation-independent O-methyltransferase family.

It participates in secondary metabolite biosynthesis. Functionally, O-methyltransferase; part of the gene cluster that mediates the biosynthesis of aurasperone B, a dimeric gamma-naphthopyrone. The first step in the biosynthesis of aurasperone B is the production of gamma-naphthopyrone precursor YWA1 by the non-reducing polyketide synthase albA, via condensation of one acetyl-CoA starter unit with 6 malonyl-CoA units. YWA1 is then methylated by aunE at position C-6 to yield foncesin which is further methylated at position C-8 by aunD to produce fonsecin B. A key enzyme in the biosynthetic pathway is the cytochrome P450 monooxygenase aunB which catalyzes the oxidative dimerization of fonsecin B to aurasperone B. AunB also catalyzes the oxidative dimerization of rubrofusarin B into aurasperone A. The protein is O-methyltransferase aunE of Aspergillus niger (strain ATCC MYA-4892 / CBS 513.88 / FGSC A1513).